The following is a 492-amino-acid chain: Ketol-acid reductoisomerase (NADP(+)) (492 aa).

Residues 15-208 (AQLGKCRFMA…GGHRAGVLES (194 aa)) enclose the KARI N-terminal Rossmann domain. Residues 45–48 (CGAQ), Arg68, Arg76, Ser78, and 108–110 (DKQ) each bind NADP(+). The active site involves His132. Gly158 provides a ligand contact to NADP(+). KARI C-terminal knotted domains lie at 209–344 (SFVA…NAPQ) and 345–485 (FEGK…MTDM). Asp217, Glu221, Glu389, and Glu393 together coordinate Mg(2+). Ser414 contributes to the substrate binding site.

Belongs to the ketol-acid reductoisomerase family. Mg(2+) is required as a cofactor.

The enzyme catalyses (2R)-2,3-dihydroxy-3-methylbutanoate + NADP(+) = (2S)-2-acetolactate + NADPH + H(+). It catalyses the reaction (2R,3R)-2,3-dihydroxy-3-methylpentanoate + NADP(+) = (S)-2-ethyl-2-hydroxy-3-oxobutanoate + NADPH + H(+). The protein operates within amino-acid biosynthesis; L-isoleucine biosynthesis; L-isoleucine from 2-oxobutanoate: step 2/4. It functions in the pathway amino-acid biosynthesis; L-valine biosynthesis; L-valine from pyruvate: step 2/4. In terms of biological role, involved in the biosynthesis of branched-chain amino acids (BCAA). Catalyzes an alkyl-migration followed by a ketol-acid reduction of (S)-2-acetolactate (S2AL) to yield (R)-2,3-dihydroxy-isovalerate. In the isomerase reaction, S2AL is rearranged via a Mg-dependent methyl migration to produce 3-hydroxy-3-methyl-2-ketobutyrate (HMKB). In the reductase reaction, this 2-ketoacid undergoes a metal-dependent reduction by NADPH to yield (R)-2,3-dihydroxy-isovalerate. The protein is Ketol-acid reductoisomerase (NADP(+)) of Yersinia pseudotuberculosis serotype O:3 (strain YPIII).